The chain runs to 468 residues: Ribulose bisphosphate carboxylase large chain (468 aa).

K5 carries the post-translational modification N6,N6,N6-trimethyllysine. The substrate site is built by N114 and T164. K166 acts as the Proton acceptor in catalysis. Residue K168 coordinates substrate. Residues K192, D194, and E195 each contribute to the Mg(2+) site. An N6-carboxylysine modification is found at K192. H285 functions as the Proton acceptor in the catalytic mechanism. The substrate site is built by R286, H318, and S370.

Belongs to the RuBisCO large chain family. Type I subfamily. In terms of assembly, heterohexadecamer of 8 large chains and 8 small chains; disulfide-linked. The disulfide link is formed within the large subunit homodimers. Mg(2+) serves as cofactor. In terms of processing, the disulfide bond which can form in the large chain dimeric partners within the hexadecamer appears to be associated with oxidative stress and protein turnover.

The protein localises to the plastid. The protein resides in the chloroplast. The catalysed reaction is 2 (2R)-3-phosphoglycerate + 2 H(+) = D-ribulose 1,5-bisphosphate + CO2 + H2O. It catalyses the reaction D-ribulose 1,5-bisphosphate + O2 = 2-phosphoglycolate + (2R)-3-phosphoglycerate + 2 H(+). Its function is as follows. RuBisCO catalyzes two reactions: the carboxylation of D-ribulose 1,5-bisphosphate, the primary event in carbon dioxide fixation, as well as the oxidative fragmentation of the pentose substrate in the photorespiration process. Both reactions occur simultaneously and in competition at the same active site. This Salvia divinorum (Maria pastora) protein is Ribulose bisphosphate carboxylase large chain.